A 101-amino-acid polypeptide reads, in one-letter code: Large ribosomal subunit protein uL24 (101 aa).

The protein belongs to the universal ribosomal protein uL24 family. Part of the 50S ribosomal subunit.

In terms of biological role, one of two assembly initiator proteins, it binds directly to the 5'-end of the 23S rRNA, where it nucleates assembly of the 50S subunit. Functionally, one of the proteins that surrounds the polypeptide exit tunnel on the outside of the subunit. This Streptococcus suis (strain 98HAH33) protein is Large ribosomal subunit protein uL24.